Reading from the N-terminus, the 229-residue chain is DNA mismatch repair protein MutH (229 aa).

The protein belongs to the MutH family.

The protein localises to the cytoplasm. In terms of biological role, sequence-specific endonuclease that cleaves unmethylated GATC sequences. It is involved in DNA mismatch repair. The protein is DNA mismatch repair protein MutH of Shigella dysenteriae serotype 1 (strain Sd197).